The sequence spans 691 residues: F-box/LRR-repeat protein 5 (691 aa).

Residues 1 to 159 (MAPFPEEVDV…IKKKVIAQHC (159 aa)) are hemerythrin-like. Fe(3+) contacts are provided by H15, H57, E58, E61, H80, H126, and E130. In terms of domain architecture, F-box spans 202–248 (STGITHLPPEVMVSIFSYLNPQELCRCSQVSTKWSQLAKTGSLWKHL). LRR repeat units lie at residues 340-364 (SSAVSSKMVRQILELCPNLEHLDLT), 365-392 (QTDISDSAFDSWSWLGCCQSLRHLDLSG), 393-418 (CEKITDVALEKISRALGILTTHESGL), 479-508 (VWMLDAEDLADIEDAVEWRHRNVESLCVME), 576-607 (TRLLREKDLIYSGSEKSDQETGRVLLFLSLSG), 608-635 (CYQITDHGLRVLTLGGGLPYLEHLNLSG), and 636-661 (CLTVTGAGLQDLVSACPSLNDEYFYY). 4 residues coordinate [2Fe-2S] cluster: C662, C676, C686, and C687.

In terms of assembly, part of a SCF (SKP1-cullin-F-box) protein ligase complex. Interacts with ACO1/IRP1, IREB2/IRP2; the interaction depends on the [2Fe-2S] cluster. Interacts with DCTN1/p150-glued. [2Fe-2S] cluster is required as a cofactor. In terms of processing, polybiquitinated upon iron and oxygen depletion, leading to its degradation by the proteasome. Ubiquitination is regulated by the hemerythrin-like region that acts as an oxygen and iron sensor. Undergoes constitutive ubiquitin-dependent degradation at the steady state by HERC2.

It localises to the cytoplasm. It is found in the perinuclear region. Its subcellular location is the nucleus. Its pathway is protein modification; protein ubiquitination. With respect to regulation, an iron-sulfur cluster promotes IRP2 polyubiquitination and degradation in response to both iron and oxygen concentrations. In terms of biological role, component of some SCF (SKP1-cullin-F-box) protein ligase complex that plays a central role in iron homeostasis by promoting the ubiquitination and subsequent degradation of IREB2/IRP2. The C-terminal domain of FBXL5 contains a redox-sensitive [2Fe-2S] cluster that, upon oxidation, promotes binding to IRP2 to effect its oxygen-dependent degradation. Under iron deficiency conditions, the N-terminal hemerythrin-like (Hr) region, which contains a diiron metal center, cannot bind iron and undergoes conformational changes that destabilize the FBXL5 protein and cause its ubiquitination and degradation. When intracellular iron levels start rising, the Hr region is stabilized. Additional increases in iron levels facilitate the assembly and incorporation of a redox active [2Fe-2S] cluster in the C-terminal domain. Only when oxygen level is high enough to maintain the cluster in its oxidized state can FBXL5 recruit IRP2 as a substrate for polyubiquination and degradation. Promotes ubiquitination and subsequent degradation of the dynactin complex component DCTN1. Within the nucleus, promotes the ubiquitination of SNAI1; preventing its interaction with DNA and promoting its degradation. Negatively regulates DNA damage response by mediating the ubiquitin-proteasome degradation of the DNA repair protein NABP2. The protein is F-box/LRR-repeat protein 5 (FBXL5) of Bos taurus (Bovine).